Reading from the N-terminus, the 299-residue chain is ATP phosphoribosyltransferase (299 aa).

This sequence belongs to the ATP phosphoribosyltransferase family. Long subfamily. In terms of assembly, equilibrium between an active dimeric form, an inactive hexameric form and higher aggregates. Interconversion between the various forms is largely reversible and is influenced by the natural substrates and inhibitors of the enzyme. Requires Mg(2+) as cofactor.

It localises to the cytoplasm. The enzyme catalyses 1-(5-phospho-beta-D-ribosyl)-ATP + diphosphate = 5-phospho-alpha-D-ribose 1-diphosphate + ATP. It functions in the pathway amino-acid biosynthesis; L-histidine biosynthesis; L-histidine from 5-phospho-alpha-D-ribose 1-diphosphate: step 1/9. Feedback inhibited by histidine. In terms of biological role, catalyzes the condensation of ATP and 5-phosphoribose 1-diphosphate to form N'-(5'-phosphoribosyl)-ATP (PR-ATP). Has a crucial role in the pathway because the rate of histidine biosynthesis seems to be controlled primarily by regulation of HisG enzymatic activity. This is ATP phosphoribosyltransferase from Buchnera aphidicola subsp. Diuraphis noxia.